Consider the following 177-residue polypeptide: Large ribosomal subunit protein uL6 (177 aa).

Belongs to the universal ribosomal protein uL6 family. In terms of assembly, part of the 50S ribosomal subunit.

Functionally, this protein binds to the 23S rRNA, and is important in its secondary structure. It is located near the subunit interface in the base of the L7/L12 stalk, and near the tRNA binding site of the peptidyltransferase center. This is Large ribosomal subunit protein uL6 from Alkalilimnicola ehrlichii (strain ATCC BAA-1101 / DSM 17681 / MLHE-1).